The following is a 311-amino-acid chain: Methenyltetrahydromethanopterin cyclohydrolase (311 aa).

This sequence belongs to the MCH family.

The protein localises to the cytoplasm. It carries out the reaction 5,10-methenyl-5,6,7,8-tetrahydromethanopterin + H2O = N(5)-formyl-5,6,7,8-tetrahydromethanopterin + H(+). Functionally, catalyzes the hydrolysis of methenyl-H(4)MPT(+) to 5-formyl-H(4)MPT. In Halobacterium salinarum (strain ATCC 29341 / DSM 671 / R1), this protein is Methenyltetrahydromethanopterin cyclohydrolase.